Reading from the N-terminus, the 762-residue chain is 5-methyltetrahydropteroyltriglutamate--homocysteine methyltransferase (762 aa).

5-methyltetrahydropteroyltri-L-glutamate contacts are provided by residues 17-20 (REWK) and Lys111. Residues 435 to 437 (IGS) and Glu488 each bind L-homocysteine. L-methionine is bound by residues 435-437 (IGS) and Glu488. Residues 519 to 520 (RC) and Trp565 each bind 5-methyltetrahydropteroyltri-L-glutamate. Asp603 is a binding site for L-homocysteine. Asp603 provides a ligand contact to L-methionine. Glu609 is a binding site for 5-methyltetrahydropteroyltri-L-glutamate. Zn(2+) is bound by residues His645, Cys647, and Glu669. Residue His698 is the Proton donor of the active site. Cys730 lines the Zn(2+) pocket.

This sequence belongs to the vitamin-B12 independent methionine synthase family. Zn(2+) is required as a cofactor.

It catalyses the reaction 5-methyltetrahydropteroyltri-L-glutamate + L-homocysteine = tetrahydropteroyltri-L-glutamate + L-methionine. It participates in amino-acid biosynthesis; L-methionine biosynthesis via de novo pathway; L-methionine from L-homocysteine (MetE route): step 1/1. Functionally, catalyzes the transfer of a methyl group from 5-methyltetrahydrofolate to homocysteine resulting in methionine formation. The sequence is that of 5-methyltetrahydropteroyltriglutamate--homocysteine methyltransferase from Bacillus cereus (strain AH820).